The chain runs to 337 residues: tRNA N6-adenosine threonylcarbamoyltransferase (337 aa).

Residues histidine 111 and histidine 115 each coordinate Fe cation. Substrate contacts are provided by residues 134 to 138 (LVSGG), aspartate 167, glycine 180, and asparagine 272. Aspartate 300 contacts Fe cation.

The protein belongs to the KAE1 / TsaD family. Fe(2+) is required as a cofactor.

The protein localises to the cytoplasm. The catalysed reaction is L-threonylcarbamoyladenylate + adenosine(37) in tRNA = N(6)-L-threonylcarbamoyladenosine(37) in tRNA + AMP + H(+). Required for the formation of a threonylcarbamoyl group on adenosine at position 37 (t(6)A37) in tRNAs that read codons beginning with adenine. Is involved in the transfer of the threonylcarbamoyl moiety of threonylcarbamoyl-AMP (TC-AMP) to the N6 group of A37, together with TsaE and TsaB. TsaD likely plays a direct catalytic role in this reaction. The chain is tRNA N6-adenosine threonylcarbamoyltransferase from Salmonella typhi.